We begin with the raw amino-acid sequence, 205 residues long: GTP cyclohydrolase-2 (205 aa).

49-53 (RVHSE) is a binding site for GTP. Zn(2+) contacts are provided by Cys-54, Cys-65, and Cys-67. GTP is bound by residues Gln-70, 92-94 (EGR), and Thr-114. Asp-126 functions as the Proton acceptor in the catalytic mechanism. Catalysis depends on Arg-128, which acts as the Nucleophile. GTP is bound by residues Thr-149 and Lys-154.

The protein belongs to the GTP cyclohydrolase II family. It depends on Zn(2+) as a cofactor.

It catalyses the reaction GTP + 4 H2O = 2,5-diamino-6-hydroxy-4-(5-phosphoribosylamino)-pyrimidine + formate + 2 phosphate + 3 H(+). It functions in the pathway cofactor biosynthesis; riboflavin biosynthesis; 5-amino-6-(D-ribitylamino)uracil from GTP: step 1/4. Catalyzes the conversion of GTP to 2,5-diamino-6-ribosylamino-4(3H)-pyrimidinone 5'-phosphate (DARP), formate and pyrophosphate. This is GTP cyclohydrolase-2 from Pseudomonas syringae pv. tomato (strain ATCC BAA-871 / DC3000).